We begin with the raw amino-acid sequence, 66 residues long: Potassium channel toxin alpha-KTx (66 aa).

An N-terminal signal peptide occupies residues 1 to 21; that stretch reads MNTKVVLIMLMITSVILVVEA. Disulfide bonds link C29/C49, C35/C59, C39/C61, and C44/C64.

This sequence belongs to the short scorpion toxin superfamily. Potassium channel inhibitor family. In terms of tissue distribution, expressed by the venom gland.

The protein resides in the secreted. Its function is as follows. Blocks voltage-gated potassium channels. The protein is Potassium channel toxin alpha-KTx of Hoffmannihadrurus gertschi (Scorpion).